Consider the following 847-residue polypeptide: Leucine--tRNA ligase (847 aa).

Positions proline 39 to histidine 49 match the 'HIGH' region motif. A 'KMSKS' region motif is present at residues lysine 613–serine 617. Residue lysine 616 participates in ATP binding.

This sequence belongs to the class-I aminoacyl-tRNA synthetase family.

Its subcellular location is the cytoplasm. The enzyme catalyses tRNA(Leu) + L-leucine + ATP = L-leucyl-tRNA(Leu) + AMP + diphosphate. This is Leucine--tRNA ligase from Gloeobacter violaceus (strain ATCC 29082 / PCC 7421).